The following is an 824-amino-acid chain: Probable ion channel POLLUX (824 aa).

A compositionally biased stretch (low complexity) spans 45–54 (DGDDSSNLPT). The disordered stretch occupies residues 45 to 70 (DGDDSSNLPTVPNPEEKPVPVPSQSP). 4 helical membrane-spanning segments follow: residues 81–101 (FSLTHCLKFICSCSFTYVMFL), 135–155 (AVVFFSVIITFVLPFLLYMYL), 198–218 (LALLLATVVLIVYGGLALYAV), and 250–270 (IVSVAISAGGMLIFATMLGLI). 2 consecutive RCK N-terminal domains span residues 291 to 432 (SNHI…ETVV) and 550 to 699 (PEKI…DKSI). Residues 325-346 (LAERDKEEMETDIAKFEFDLMG) are a coiled coil.

It belongs to the castor/pollux (TC 1.A.1.23) family.

The protein localises to the nucleus membrane. The protein is Probable ion channel POLLUX of Arabidopsis thaliana (Mouse-ear cress).